The primary structure comprises 398 residues: Cytochrome b561 and DOMON domain-containing protein At3g61750 (398 aa).

The N-terminal stretch at 1-23 is a signal peptide; sequence MKTLVGFYILCFLIGQDLPFLAA. One can recognise a DOMON domain in the interval 64-177; it reads NTFVLRYSEN…PRRAVILAFS (114 aa). Residues 184–377 form the Cytochrome b561 domain; sequence LGRLTKHDDK…LEIFRIRGTI (194 aa). His-220 is a binding site for heme b. 2 helical membrane-spanning segments follow: residues 222–242 and 252–272; these read VMAILGWGFLLPVGAILARYL and LHIGFQFTGFIFGLAAVILGI. Residues His-253 and His-285 each coordinate heme b. 3 helical membrane-spanning segments follow: residues 287 to 307, 320 to 340, and 351 to 371; these read GIGIFLLVLSTLQVLAFFARP, YHHWIGRISLFFGAVNIVLGI, and KIGYGFVLSVTLLAFVVLEIF. His-321 lines the heme b pocket.

It depends on heme b as a cofactor.

It localises to the membrane. Functionally, may act as a catecholamine-responsive trans-membrane electron transporter. The polypeptide is Cytochrome b561 and DOMON domain-containing protein At3g61750 (Arabidopsis thaliana (Mouse-ear cress)).